The following is a 319-amino-acid chain: Ribonucleoside-diphosphate reductase small chain (319 aa).

Fe cation is bound by residues aspartate 70, glutamate 101, and histidine 104. The active site involves tyrosine 108. Residues glutamate 163, glutamate 197, and histidine 200 each coordinate Fe cation. The interaction with R1 stretch occupies residues 313 to 319 (FSLDVDF).

The protein belongs to the ribonucleoside diphosphate reductase small chain family. Interacts with RNR1/OPG080 subunit. Can interact with host RNR1 supunit. Fe cation is required as a cofactor.

It catalyses the reaction a 2'-deoxyribonucleoside 5'-diphosphate + [thioredoxin]-disulfide + H2O = a ribonucleoside 5'-diphosphate + [thioredoxin]-dithiol. Ribonucleoside-diphosphate reductase holoenzyme provides the precursors necessary for viral DNA synthesis. Allows virus growth in non-dividing cells. Catalyzes the biosynthesis of deoxyribonucleotides from the corresponding ribonucleotides. In Variola virus, this protein is Ribonucleoside-diphosphate reductase small chain (OPG048).